A 100-amino-acid polypeptide reads, in one-letter code: Small ribosomal subunit protein uS14 (100 aa).

It belongs to the universal ribosomal protein uS14 family. Part of the 30S ribosomal subunit. Contacts proteins S3 and S10.

Its function is as follows. Binds 16S rRNA, required for the assembly of 30S particles and may also be responsible for determining the conformation of the 16S rRNA at the A site. This Trichormus variabilis (strain ATCC 29413 / PCC 7937) (Anabaena variabilis) protein is Small ribosomal subunit protein uS14.